The chain runs to 1216 residues: 1-phosphatidylinositol 4,5-bisphosphate phosphodiesterase beta-1 (1216 aa).

Cys-17 carries S-palmitoyl cysteine lipidation. Phosphoserine is present on Ser-236. The region spanning 316–467 is the PI-PLC X-box domain; the sequence is EDMSQPLSHY…LMYKILVKNK (152 aa). Catalysis depends on residues His-331 and His-378. Position 417 is a phosphoserine (Ser-417). A disordered region spans residues 469–534; it reads KSHKSSEGSG…MDEGTAGSEA (66 aa). Residues 472-483 show a composition bias toward basic and acidic residues; sequence KSSEGSGKKKLS. Positions 491–501 are enriched in low complexity; that stretch reads SDSSSVFEPSS. The segment covering 507–518 has biased composition (acidic residues); the sequence is ADTESDDDDDDD. A Phosphothreonine modification is found at Thr-509. Ser-511 and Ser-582 each carry phosphoserine. The region spanning 540-656 is the PI-PLC Y-box domain; the sequence is MSNLVNYIQP…GYRLKPEFMR (117 aa). Residues 656–784 enclose the C2 domain; it reads RRPDKHFDPF…CLRNERNQPL (129 aa). 4 disordered regions span residues 834-891, 933-993, 1071-1095, and 1172-1216; these read DEEE…VKAP, LVKR…IEQD, KMDK…EEEK, and KISE…DTPL. Ser-887 carries the phosphoserine; by PKC modification. 2 stretches are compositionally biased toward basic and acidic residues: residues 941 to 951 and 959 to 979; these read TTDLIKEHTTK and YLRR…KKSE. Phosphoserine is present on residues Ser-978 and Ser-987. Residues 980–991 show a composition bias toward polar residues; it reads PSSPDHVSSTIE. The segment covering 1075–1095 has biased composition (basic and acidic residues); it reads KRQEKITEAKSKDKSQMEEEK. The segment covering 1187–1198 has biased composition (polar residues); the sequence is TSDSGKLNQKPP. Phosphoserine occurs at positions 1199 and 1200. Basic and acidic residues predominate over residues 1207–1216; the sequence is NPGKEFDTPL.

In terms of assembly, interacts with DGKQ. The cofactor is Ca(2+). Post-translationally, palmitoylated. Palmitoylation at Cys-17 by ZDHHC21 regulates the signaling activity of PLCB1 and the function of the endothelial barrier. Palmitoylation by ZDHHC21 is stimulated by inflammation.

Its subcellular location is the nucleus membrane. The protein resides in the cytoplasm. It carries out the reaction a 1,2-diacyl-sn-glycero-3-phospho-(1D-myo-inositol-4,5-bisphosphate) + H2O = 1D-myo-inositol 1,4,5-trisphosphate + a 1,2-diacyl-sn-glycerol + H(+). The enzyme catalyses a 1,2-diacyl-sn-glycero-3-phospho-(1D-myo-inositol) + H2O = 1D-myo-inositol 1-phosphate + a 1,2-diacyl-sn-glycerol + H(+). Functionally, catalyzes the hydrolysis of 1-phosphatidylinositol 4,5-bisphosphate into diacylglycerol (DAG) and inositol 1,4,5-trisphosphate (IP3) and mediates intracellular signaling downstream of G protein-coupled receptors. Regulates the function of the endothelial barrier. The protein is 1-phosphatidylinositol 4,5-bisphosphate phosphodiesterase beta-1 (PLCB1) of Bos taurus (Bovine).